The following is a 69-amino-acid chain: U2-agatoxin-Ao1c (69 aa).

The signal sequence occupies residues 1–20 (MKAIISLLLISAMVFSMIEA). The propeptide occupies 21-34 (VPVEEGLQLFEGER). Cystine bridges form between Cys36–Cys52, Cys43–Cys57, and Cys51–Cys67. The residue at position 68 (Leu68) is a Leucine amide.

This sequence belongs to the neurotoxin 01 (U2-agtx) family. As to expression, expressed by the venom gland.

The protein localises to the secreted. Insect active toxin causing rapid but reversible paralysis in crickets. No activity shown in mammals. Does not show effect on mammalian voltage-gated calcium channels. The protein is U2-agatoxin-Ao1c of Agelena orientalis (Funnel-web spider).